Reading from the N-terminus, the 394-residue chain is 4-hydroxybenzoate 3-monooxygenase (NAD(P)H) (394 aa).

FAD contacts are provided by residues Glu-32, 42 to 47 (TIRAGV), and Gln-102. Substrate contacts are provided by residues Tyr-203, 214 to 216 (STR), and Tyr-224. Asp-288 serves as a coordination point for FAD. Pro-295 lines the substrate pocket. FAD is bound at residue 301–302 (LN).

This sequence belongs to the aromatic-ring hydroxylase family. It depends on FAD as a cofactor.

The catalysed reaction is 4-hydroxybenzoate + NADH + O2 + H(+) = 3,4-dihydroxybenzoate + NAD(+) + H2O. It catalyses the reaction 4-hydroxybenzoate + NADPH + O2 + H(+) = 3,4-dihydroxybenzoate + NADP(+) + H2O. Its function is as follows. Involved in the degradation of 4-hydroxybenzoate (4HB) via the protocatechuate (PCA) 2,3-cleavage pathway. Catalyzes the conversion of 4HB into 2-hydroxypenta-2,4-dienoate (HPD). It is highly specific for 4-hydroxybenzoate, and is able to utilize both NADH and NADPH as electron donors at approximately equal rates. The polypeptide is 4-hydroxybenzoate 3-monooxygenase (NAD(P)H) (praI) (Paenibacillus sp).